The following is a 20-amino-acid chain: Apidaecin 3+ (20 aa).

Residues 1-20 (GKPSRPRPAPIQPRPPHPRL) are disordered.

This sequence belongs to the apidaecin family.

It localises to the secreted. Its function is as follows. Antimicrobial peptide active against many Gram-negative enterobacterial and plant-associated bacterial species. Not active against other bacterial species like H.pylori, P.mirabilis, B.pertussis or N.gonorrhoeae. Among others, also active against S.typhi. In terms of biological role, not active against S.typhi. The polypeptide is Apidaecin 3+ (Pimpla disparis (Parasitic wasp)).